The chain runs to 252 residues: Geranylgeranylglyceryl phosphate synthase (252 aa).

Positions 26 and 55 each coordinate Mg(2+). Residues 174–180 (YLEAGSG), 205–206 (GG), and 227–228 (GT) contribute to the sn-glycerol 1-phosphate site.

Belongs to the GGGP/HepGP synthase family. Group II subfamily. It depends on Mg(2+) as a cofactor.

The protein localises to the cytoplasm. The enzyme catalyses sn-glycerol 1-phosphate + (2E,6E,10E)-geranylgeranyl diphosphate = sn-3-O-(geranylgeranyl)glycerol 1-phosphate + diphosphate. The protein operates within membrane lipid metabolism; glycerophospholipid metabolism. Its function is as follows. Prenyltransferase that catalyzes the transfer of the geranylgeranyl moiety of geranylgeranyl diphosphate (GGPP) to the C3 hydroxyl of sn-glycerol-1-phosphate (G1P). This reaction is the first ether-bond-formation step in the biosynthesis of archaeal membrane lipids. This is Geranylgeranylglyceryl phosphate synthase from Thermococcus gammatolerans (strain DSM 15229 / JCM 11827 / EJ3).